Here is a 382-residue protein sequence, read N- to C-terminus: UDP-4-amino-4-deoxy-L-arabinose--oxoglutarate aminotransferase (382 aa).

Lys182 bears the N6-(pyridoxal phosphate)lysine mark.

This sequence belongs to the DegT/DnrJ/EryC1 family. ArnB subfamily. In terms of assembly, homodimer. Pyridoxal 5'-phosphate serves as cofactor.

The catalysed reaction is UDP-4-amino-4-deoxy-beta-L-arabinose + 2-oxoglutarate = UDP-beta-L-threo-pentopyranos-4-ulose + L-glutamate. It functions in the pathway nucleotide-sugar biosynthesis; UDP-4-deoxy-4-formamido-beta-L-arabinose biosynthesis; UDP-4-deoxy-4-formamido-beta-L-arabinose from UDP-alpha-D-glucuronate: step 2/3. It participates in bacterial outer membrane biogenesis; lipopolysaccharide biosynthesis. Functionally, catalyzes the conversion of UDP-4-keto-arabinose (UDP-Ara4O) to UDP-4-amino-4-deoxy-L-arabinose (UDP-L-Ara4N). The modified arabinose is attached to lipid A and is required for resistance to polymyxin and cationic antimicrobial peptides. The polypeptide is UDP-4-amino-4-deoxy-L-arabinose--oxoglutarate aminotransferase (Pectobacterium carotovorum subsp. carotovorum (strain PC1)).